Consider the following 436-residue polypeptide: GTPase Der (436 aa).

2 EngA-type G domains span residues 3 to 168 (PLVA…EEKS) and 177 to 352 (IRLA…EQRS). Residues 9 to 16 (GRPNVGKS), 56 to 60 (DTGGY), 120 to 123 (NKVE), 183 to 190 (GRPNVGKS), 230 to 234 (DTAGL), and 295 to 298 (NKWD) contribute to the GTP site. The 84-residue stretch at 353 to 436 (QQITTSDLNR…VPFSLRFMQK (84 aa)) folds into the KH-like domain.

Belongs to the TRAFAC class TrmE-Era-EngA-EngB-Septin-like GTPase superfamily. EngA (Der) GTPase family. Associates with the 50S ribosomal subunit.

In terms of biological role, GTPase that plays an essential role in the late steps of ribosome biogenesis. This chain is GTPase Der, found in Prosthecochloris aestuarii (strain DSM 271 / SK 413).